The chain runs to 181 residues: Transcriptional repressor NrdR (181 aa).

Residues 3–34 (CLFCQHTDTRVIDSRVSEDGATIRRRRECEAC) fold into a zinc finger. In terms of domain architecture, ATP-cone spans 49–139 (PVIIKKDGGR…VYRSFQDVAD (91 aa)).

It belongs to the NrdR family. Requires Zn(2+) as cofactor.

Functionally, negatively regulates transcription of bacterial ribonucleotide reductase nrd genes and operons by binding to NrdR-boxes. The protein is Transcriptional repressor NrdR of Xylella fastidiosa (strain M12).